The primary structure comprises 242 residues: Protein Thf1 (242 aa).

Residues 178 to 209 adopt a coiled-coil conformation; the sequence is SSDKLQKDLDLYRSNLDKMQQLLTVIEDTLEA. Residues 212-242 form a disordered region; it reads KKRASQKLEKKPEVVEEKEHKENEEQQQSSN. Over residues 217–235 the composition is skewed to basic and acidic residues; the sequence is QKLEKKPEVVEEKEHKENE.

The protein belongs to the THF1 family.

Functionally, may be involved in photosynthetic membrane biogenesis. This Crocosphaera subtropica (strain ATCC 51142 / BH68) (Cyanothece sp. (strain ATCC 51142)) protein is Protein Thf1.